The chain runs to 278 residues: Thioredoxin-related transmembrane protein 1 (278 aa).

The first 26 residues, 1–26 (MAHLGRLMVPLAALVLLLWAVPGAHG), serve as a signal peptide directing secretion. One can recognise a Thioredoxin domain in the interval 27 to 132 (RRNNVRVLTD…FINFVSDKEW (106 aa)). Residues 27 to 181 (RRNNVRVLTD…DLGIPAWGSY (155 aa)) are Extracellular-facing. Active-site nucleophile residues include C56 and C59. Residues C56 and C59 are joined by a disulfide bond. A helical membrane pass occupies residues 182–202 (LVFAFATVLSGLLLGLCMIFV). The Cytoplasmic portion of the chain corresponds to 203-278 (ADCLCPSKRR…VGLPSATDTS (76 aa)). Residues C205 and C207 are each lipidated (S-palmitoyl cysteine). The span at 217 to 226 (QYAKKTSPEF) shows a compositional bias: polar residues. The segment at 217–278 (QYAKKTSPEF…VGLPSATDTS (62 aa)) is disordered. Over residues 235–251 (EEQEADEEDVSEEEAED) the composition is skewed to acidic residues. 2 positions are modified to phosphoserine: S245 and S278.

In terms of assembly, interacts with ATP2A2. Palmitoylated; palmitoylation is required for localization to mitochondria-associated endoplasmic reticulum membrane (MAM).

It localises to the endoplasmic reticulum membrane. Its subcellular location is the mitochondrion membrane. The protein localises to the secreted. It carries out the reaction Catalyzes the rearrangement of -S-S- bonds in proteins.. Thiredoxin domain-containing protein that participates in various redox reactions through the reversible oxidation of its active center dithiol to a disulfide and catalyze dithiol-disulfide exchange reactions. Acts as a key inhibitor of the alternative triglyceride biosynthesis pathway by inhibiting the activity of TMEM68/DIESL at the endoplasmic reticulum, thereby restricting accumulation of triacylglycerol. The alternative triglyceride biosynthesis pathway mediates formation of triacylglycerol from diacylglycerol and membrane phospholipids. Acts as a protein disulfide isomerase by catalyzing formation or reduction of disulfide bonds. Specifically mediates formation of disulfide bonds of transmembrane proteins at the endoplasmic reticulum membrane. Involved in ER-associated degradation (ERAD) via its protein disulfide isomerase activity by acting on folding-defective polypeptides at the endoplasmic reticulum membrane. Acts as a negative regulator of platelet aggregation following secretion in the extracellular space. Acts as a regulator of endoplasmic reticulum-mitochondria contact sites via its ability to regulate redox signals. Regulates endoplasmic reticulum-mitochondria Ca(2+) flux. The protein is Thioredoxin-related transmembrane protein 1 of Mus musculus (Mouse).